We begin with the raw amino-acid sequence, 431 residues long: Chaperone SurA (431 aa).

The first 22 residues, 1–22 (MNLKKLLTSAVLSISLCQSAFA), serve as a signal peptide directing secretion. PpiC domains are found at residues 173–274 (AEEY…KVQD) and 283–383 (TTET…QLLD).

It is found in the periplasm. The enzyme catalyses [protein]-peptidylproline (omega=180) = [protein]-peptidylproline (omega=0). In terms of biological role, chaperone involved in the correct folding and assembly of outer membrane proteins. Recognizes specific patterns of aromatic residues and the orientation of their side chains, which are found more frequently in integral outer membrane proteins. May act in both early periplasmic and late outer membrane-associated steps of protein maturation. This Pseudoalteromonas translucida (strain TAC 125) protein is Chaperone SurA.